Here is a 106-residue protein sequence, read N- to C-terminus: Small ribosomal subunit protein bS6 (106 aa).

The protein belongs to the bacterial ribosomal protein bS6 family.

Binds together with bS18 to 16S ribosomal RNA. In Cyanothece sp. (strain PCC 7425 / ATCC 29141), this protein is Small ribosomal subunit protein bS6.